Consider the following 411-residue polypeptide: Putative competence-damage inducible protein (411 aa).

The protein belongs to the CinA family.

The sequence is that of Putative competence-damage inducible protein from Desulforamulus reducens (strain ATCC BAA-1160 / DSM 100696 / MI-1) (Desulfotomaculum reducens).